The following is a 74-amino-acid chain: UPF0346 protein PEPE_1063 (74 aa).

The protein belongs to the UPF0346 family.

This chain is UPF0346 protein PEPE_1063, found in Pediococcus pentosaceus (strain ATCC 25745 / CCUG 21536 / LMG 10740 / 183-1w).